A 201-amino-acid polypeptide reads, in one-letter code: Dephospho-CoA kinase (201 aa).

In terms of domain architecture, DPCK spans 4–201 (IIGITGGIAS…LEGGRQDDRD (198 aa)). Position 12–17 (12–17 (ASGKST)) interacts with ATP.

This sequence belongs to the CoaE family.

Its subcellular location is the cytoplasm. The catalysed reaction is 3'-dephospho-CoA + ATP = ADP + CoA + H(+). It functions in the pathway cofactor biosynthesis; coenzyme A biosynthesis; CoA from (R)-pantothenate: step 5/5. Functionally, catalyzes the phosphorylation of the 3'-hydroxyl group of dephosphocoenzyme A to form coenzyme A. The chain is Dephospho-CoA kinase from Streptococcus pneumoniae serotype 4 (strain ATCC BAA-334 / TIGR4).